The chain runs to 398 residues: Protein trichome birefringence-like 45 (398 aa).

The helical; Signal-anchor for type II membrane protein transmembrane segment at 1–21 threads the bilayer; that stretch reads MAAVQCLTFLFLFLLQNATSA. The GDS motif motif lies at 131–133; that stretch reads GDS. A DCXHWCLPGXXDXWN motif motif is present at residues 375–389; it reads DCSHWCLPGLPDTWN.

The protein belongs to the PC-esterase family. TBL subfamily.

It is found in the membrane. Its function is as follows. May act as a bridging protein that binds pectin and other cell wall polysaccharides. Probably involved in maintaining esterification of pectins. May be involved in the specific O-acetylation of cell wall polymers. The chain is Protein trichome birefringence-like 45 (TBL45) from Arabidopsis thaliana (Mouse-ear cress).